A 501-amino-acid chain; its full sequence is Suppressor of hairless protein homolog (501 aa).

DNA-binding stretches follow at residues 58 to 68, 166 to 171, and 193 to 198; these read QKSYGNEKRFF, SKPSKK, and RLRSQT. Residues 356–446 enclose the IPT/TIG domain; it reads PVVESLQLNG…YSTSLTFTYT (91 aa).

The protein belongs to the Su(H) family. As to quaternary structure, interacts with activated Notch proteins. Forms a ternary complex with nrarp and the intracellular domain (NICD) of notch1. Interacts with rita1, leading to nuclear export, prevent the interaction between rbpj and NICD product and subsequent down-regulation of the Notch signaling pathway.

The protein resides in the nucleus. The protein localises to the cytoplasm. Functionally, transcriptional regulator that plays a central role in Notch signaling, a signaling pathway involved in cell-cell communication that regulates a broad spectrum of cell-fate determinations. Acts as a transcriptional repressor when it is not associated with Notch proteins. When associated with some NICD product of Notch proteins (Notch intracellular domain), it acts as a transcriptional activator that activates transcription of Notch target genes. Required for the transcriptional activation of ESR1, suggesting that it is required during primary neurogenesis in embryos. Binds to the oxygen responsive element of COX4I2 and activates its transcription under hypoxia conditions (4% oxygen). In Xenopus laevis (African clawed frog), this protein is Suppressor of hairless protein homolog (rbpj).